A 307-amino-acid chain; its full sequence is tRNA dimethylallyltransferase (307 aa).

9–16 is a binding site for ATP; the sequence is GPTAVGKT. 11–16 provides a ligand contact to substrate; it reads TAVGKT. Residues 34 to 37 form an interaction with substrate tRNA region; sequence DSMQ.

This sequence belongs to the IPP transferase family. In terms of assembly, monomer. Mg(2+) is required as a cofactor.

It catalyses the reaction adenosine(37) in tRNA + dimethylallyl diphosphate = N(6)-dimethylallyladenosine(37) in tRNA + diphosphate. In terms of biological role, catalyzes the transfer of a dimethylallyl group onto the adenine at position 37 in tRNAs that read codons beginning with uridine, leading to the formation of N6-(dimethylallyl)adenosine (i(6)A). This is tRNA dimethylallyltransferase from Limosilactobacillus fermentum (strain NBRC 3956 / LMG 18251) (Lactobacillus fermentum).